Reading from the N-terminus, the 396-residue chain is Elongation factor Tu (396 aa).

The tr-type G domain occupies 10 to 206; sequence KPHVNVGTIG…ALDSYIPEPV (197 aa). The segment at 19 to 26 is G1; sequence GHIDHGKT. 19-26 serves as a coordination point for GTP; it reads GHIDHGKT. Thr26 contributes to the Mg(2+) binding site. Positions 60-64 are G2; the sequence is TKTVT. The segment at 83-86 is G3; it reads DCPG. GTP-binding positions include 83–87 and 138–141; these read DCPGH and NKCD. The segment at 138-141 is G4; sequence NKCD. Residues 176–178 form a G5 region; the sequence is ASL.

Belongs to the TRAFAC class translation factor GTPase superfamily. Classic translation factor GTPase family. EF-Tu/EF-1A subfamily. Monomer.

The protein resides in the cytoplasm. It catalyses the reaction GTP + H2O = GDP + phosphate + H(+). GTP hydrolase that promotes the GTP-dependent binding of aminoacyl-tRNA to the A-site of ribosomes during protein biosynthesis. This chain is Elongation factor Tu, found in Sorangium cellulosum (strain So ce56) (Polyangium cellulosum (strain So ce56)).